Consider the following 291-residue polypeptide: Protease HtpX homolog (291 aa).

The next 2 membrane-spanning stretches (helical) occupy residues 4 to 24 and 38 to 58; these read VFLF…SARL and LGML…ISLL. A Zn(2+)-binding site is contributed by histidine 144. Glutamate 145 is an active-site residue. Zn(2+) is bound at residue histidine 148. The next 2 helical transmembrane spans lie at 159-179 and 199-219; these read LIQG…AYAL and ISSI…VMYF. Zn(2+) is bound at residue glutamate 224.

The protein belongs to the peptidase M48B family. Zn(2+) serves as cofactor.

It localises to the cell inner membrane. The polypeptide is Protease HtpX homolog (Chlorobium luteolum (strain DSM 273 / BCRC 81028 / 2530) (Pelodictyon luteolum)).